The primary structure comprises 379 residues: Anhydro-N-acetylmuramic acid kinase (379 aa).

9-16 (GTSADGVD) contributes to the ATP binding site.

This sequence belongs to the anhydro-N-acetylmuramic acid kinase family.

The catalysed reaction is 1,6-anhydro-N-acetyl-beta-muramate + ATP + H2O = N-acetyl-D-muramate 6-phosphate + ADP + H(+). The protein operates within amino-sugar metabolism; 1,6-anhydro-N-acetylmuramate degradation. It functions in the pathway cell wall biogenesis; peptidoglycan recycling. Functionally, catalyzes the specific phosphorylation of 1,6-anhydro-N-acetylmuramic acid (anhMurNAc) with the simultaneous cleavage of the 1,6-anhydro ring, generating MurNAc-6-P. Is required for the utilization of anhMurNAc either imported from the medium or derived from its own cell wall murein, and thus plays a role in cell wall recycling. The protein is Anhydro-N-acetylmuramic acid kinase of Synechococcus sp. (strain CC9605).